We begin with the raw amino-acid sequence, 461 residues long: tRNA modification GTPase MnmE (461 aa).

Positions 32, 89, and 128 each coordinate (6S)-5-formyl-5,6,7,8-tetrahydrofolate. The TrmE-type G domain maps to 224 to 387 (GHALSIVGKP…LSQKISEFFP (164 aa)). Asparagine 234 contributes to the K(+) binding site. GTP is bound by residues 234–239 (NAGKSS), 253–259 (SDIKGTT), and 278–281 (DTAG). Serine 238 provides a ligand contact to Mg(2+). K(+)-binding residues include serine 253, isoleucine 255, and threonine 258. Threonine 259 lines the Mg(2+) pocket. Lysine 461 serves as a coordination point for (6S)-5-formyl-5,6,7,8-tetrahydrofolate.

This sequence belongs to the TRAFAC class TrmE-Era-EngA-EngB-Septin-like GTPase superfamily. TrmE GTPase family. As to quaternary structure, homodimer. Heterotetramer of two MnmE and two MnmG subunits. Requires K(+) as cofactor.

The protein localises to the cytoplasm. In terms of biological role, exhibits a very high intrinsic GTPase hydrolysis rate. Involved in the addition of a carboxymethylaminomethyl (cmnm) group at the wobble position (U34) of certain tRNAs, forming tRNA-cmnm(5)s(2)U34. This chain is tRNA modification GTPase MnmE, found in Helicobacter pylori (strain J99 / ATCC 700824) (Campylobacter pylori J99).